The following is a 234-amino-acid chain: Ribonuclease HII (234 aa).

In terms of domain architecture, RNase H type-2 spans 16 to 207 (ALVAGVDEAG…VRRMLTPKAI (192 aa)). The a divalent metal cation site is built by Asp22, Glu23, and Asp115.

This sequence belongs to the RNase HII family. The cofactor is Mn(2+). Requires Mg(2+) as cofactor.

It is found in the cytoplasm. It catalyses the reaction Endonucleolytic cleavage to 5'-phosphomonoester.. Endonuclease that specifically degrades the RNA of RNA-DNA hybrids. This is Ribonuclease HII from Xylella fastidiosa (strain M23).